A 342-amino-acid polypeptide reads, in one-letter code: UDP-glucuronic acid decarboxylase 3 (342 aa).

Residues 1–11 (MAATSEKQNTT) are compositionally biased toward polar residues. Residues 1–22 (MAATSEKQNTTKPPPSPSPLRN) are disordered. Residue 61–86 (DNYFTGSKENLKKWIGHPRFELIRHD) coordinates NAD(+). Arg-170 is a substrate binding site. The active-site Proton acceptor is the Tyr-173. Residue 173-177 (YDEGK) coordinates NAD(+). Asn-202 contacts substrate. Residue Arg-214 coordinates NAD(+). Substrate contacts are provided by residues 215–219 (VVSNF), 232–239 (QKPGTQTR), and 299–303 (DPRQR).

The protein belongs to the NAD(P)-dependent epimerase/dehydratase family. UDP-glucuronic acid decarboxylase subfamily. NAD(+) serves as cofactor. In terms of tissue distribution, ubiquitous.

The protein localises to the cytoplasm. The catalysed reaction is UDP-alpha-D-glucuronate + H(+) = UDP-alpha-D-xylose + CO2. It functions in the pathway nucleotide-sugar biosynthesis; UDP-alpha-D-xylose biosynthesis; UDP-alpha-D-xylose from UDP-alpha-D-glucuronate: step 1/1. In terms of biological role, catalyzes the NAD-dependent decarboxylation of UDP-glucuronic acid to UDP-xylose. Necessary for the biosynthesis of the core tetrasaccharide in glycosaminoglycan biosynthesis. The chain is UDP-glucuronic acid decarboxylase 3 (UXS3) from Arabidopsis thaliana (Mouse-ear cress).